We begin with the raw amino-acid sequence, 305 residues long: Olfactory receptor 9G1 (305 aa).

The Extracellular segment spans residues 1–24 (MQRSNHTVTEFILLGFTTDPGMQL). The N-linked (GlcNAc...) asparagine glycan is linked to N5. The chain crosses the membrane as a helical span at residues 25–45 (GLFVVFLGVYSLTVVGNSTLI). The Cytoplasmic segment spans residues 46–53 (VLICNDSC). Residues 54-74 (LHTPMYFFTGNLSFLDLWYSS) traverse the membrane as a helical segment. At 75 to 98 (VYTPKILVTCISEDKSISFAGCLC) the chain is on the extracellular side. A disulfide bridge connects residues C96 and C188. A helical membrane pass occupies residues 99–119 (QFFFSAGLAYSECYLLAAVAY). Topologically, residues 120–138 (DRYVAISKPLLYAQAMSIK) are cytoplasmic. Residues 139-159 (LCALLVAVSYCGGFINSSIIT) form a helical membrane-spanning segment. Residues 160 to 196 (KKTFSFNFCRENIIDDFFCDLLPLVELACGEKGGYKI) are Extracellular-facing. A helical membrane pass occupies residues 197 to 216 (MMYFLLASNVICPAVLILAS). Residues 217-236 (YLFIITSVLRISSSKGYLKA) lie on the Cytoplasmic side of the membrane. The helical transmembrane segment at 237–257 (FSTCSSHLTSVTLYYGSILYI) threads the bilayer. At 258-270 (YALPRSSYSFDMD) the chain is on the extracellular side. The helical transmembrane segment at 271–291 (KIVSTFYTVVFPMLNLMIYSL) threads the bilayer. Topologically, residues 292–305 (RNKDVKEALKKLLP) are cytoplasmic.

It belongs to the G-protein coupled receptor 1 family.

Its subcellular location is the cell membrane. Odorant receptor. This is Olfactory receptor 9G1 (OR9G1) from Homo sapiens (Human).